The following is a 354-amino-acid chain: MRFAPDYVLCPPTATRRLRATHPSVSTIYFLFTIFVVSTVFHCHQRLALVPAPWAYSARVVVVPGHLPREGMWTINAMGRLGNQMGEYATLYALAKENGRPAYIPAQMHSTLAPIFRISLPVLHSSTASRVPWQNYHLNDWMEERYRHIPVPYVRLTGYPCSWTFYHHLRHEILREFTLHDHVREEAQAFLRGLRVNGSRPSTFVGVHVRRGDYVRVMPQVWKGVVADRGYLEQALDWFRAPTAPPVFVVTSNGMAWCRENIDASRGDVVFAGNGLEGSPAKDFALLTQCNHTVMTIGTFGFWAAYLTGGDTVYLANYTAPDSPFHLVFKPEAAFLPEWVGITANMGRALWSGL.

Topologically, residues 1–22 (MRFAPDYVLCPPTATRRLRATH) are cytoplasmic. A helical; Signal-anchor for type II membrane protein membrane pass occupies residues 23 to 43 (PSVSTIYFLFTIFVVSTVFHC). Topologically, residues 44–354 (HQRLALVPAP…NMGRALWSGL (311 aa)) are lumenal. N-linked (GlcNAc...) asparagine glycans are attached at residues Asn197, Asn291, and Asn317.

This sequence belongs to the glycosyltransferase 11 family. As to expression, salivary and lactating mammary glands.

The protein localises to the golgi apparatus. The protein resides in the golgi stack membrane. The catalysed reaction is a beta-D-galactosyl-(1-&gt;3)-N-acetyl-beta-D-glucosaminyl derivative + GDP-beta-L-fucose = an alpha-L-Fuc-(1-&gt;2)-beta-D-Gal-(1-&gt;3)-beta-D-GlcNAc derivative + GDP + H(+). It carries out the reaction a beta-D-galactosyl-(1-&gt;4)-N-acetyl-beta-D-glucosaminyl derivative + GDP-beta-L-fucose = an alpha-L-Fuc-(1-&gt;2)-beta-D-Gal-(1-&gt;4)-beta-D-GlcNAc derivative + GDP + H(+). It catalyses the reaction a neolactoside nLc4Cer + GDP-beta-L-fucose = a neolactoside IV(2)-alpha-Fuc-nLc4Cer + GDP + H(+). The enzyme catalyses a neolactoside nLc4Cer(d18:1(4E)) + GDP-beta-L-fucose = a neolactoside IV(2)-alpha-Fuc-nLc4Cer(d18:1(4E)) + GDP + H(+). The catalysed reaction is a ganglioside GM1 + GDP-beta-L-fucose = a ganglioside Fuc-GM1 + GDP + H(+). It carries out the reaction a ganglioside GA1 + GDP-beta-L-fucose = a ganglioside Fuc-GA1 + GDP + H(+). It catalyses the reaction Lc4Cer + GDP-beta-L-fucose = alpha-L-fucosyl-(1-&gt;2)-beta-D-galactosyl-(1-&gt;3)-N-acetyl-beta-D-glucosaminyl-(1-&gt;3)-beta-D-galactosyl-(1-&gt;4)-beta-D-glucosyl-(1&lt;-&gt;1')-ceramide + GDP + H(+). The enzyme catalyses a beta-D-Gal-(1-&gt;3)-beta-D-GlcNAc-(1-&gt;3)-beta-D-Gal-(1-&gt;4)-beta-D-Glc-(1&lt;-&gt;1')-Cer(d18:1(4E)) + GDP-beta-L-fucose = alpha-L-fucosyl-(1-&gt;2)- beta-D-galactosyl-(1-&gt;3)-N-acetyl-beta-D-glucosaminyl-(1-&gt;3)-beta-D-galactosyl-(1-&gt;4)-beta-D-glucosyl-(1&lt;-&gt;1')-N-acylsphing-4-enine + GDP + H(+). The catalysed reaction is a ganglioside GD1b + GDP-beta-L-fucose = a ganglioside Fuc-GD1b + GDP + H(+). It carries out the reaction a ganglioside GM1 (d18:1(4E)) + GDP-beta-L-fucose = a ganglioside Fuc-GM1 (d18:1(4E)) + GDP + H(+). It catalyses the reaction a globoside GalGb4Cer (d18:1(4E)) + GDP-beta-L-fucose = a globoside Globo-H (d18:1(4E)) + GDP + H(+). The enzyme catalyses a lactoside III(4)-a-Fuc-Lc4Cer + GDP-beta-L-fucose = a lactoside IV(2),III(4)-a-[Fuc]2-Lc4Cer + GDP + H(+). The catalysed reaction is beta-D-galactosyl-(1-&gt;3)-N-acetyl-D-galactosamine + GDP-beta-L-fucose = alpha-L-fucosyl-(1-&gt;2)-beta-D-galactosyl-(1-&gt;3)-N-acetyl-D-galactosamine + GDP + H(+). It functions in the pathway protein modification; protein glycosylation. Catalyzes the transfer of L-fucose, from a guanosine diphosphate-beta-L-fucose, to the terminal galactose on both O- and N-linked glycans chains of cell surface glycoproteins and glycolipids and the resulting epitope regulates several processes such as cell-cell interaction including host-microbe interaction, cell surface expression and cell proliferation. Preferentially fucosylates gangliosides GA1 and GM1 in the antrum, cecum and colon and in the female reproductive organs. Fucosylated host glycoproteins or glycolipids mediate interaction with intestinal microbiota influencing its composition. Creates a soluble precursor oligosaccharide FuC-alpha ((1,2)Galbeta-) called the H antigen which is an essential substrate for the final step in the soluble ABO blood group antigen synthesis pathway. The chain is Galactoside alpha-(1,2)-fucosyltransferase 2 from Oryctolagus cuniculus (Rabbit).